A 516-amino-acid chain; its full sequence is D-aminopeptidase (516 aa).

Catalysis depends on serine 61, which acts as the Nucleophile. Lysine 64 serves as the catalytic Proton donor/acceptor. The tract at residues arginine 476–aspartate 486 is important for specificity. Aspartate 480 is a substrate binding site.

Belongs to the peptidase S12 family. Homodimer.

The catalysed reaction is Release of an N-terminal D-amino acid from a peptide, Xaa-|-Yaa-, in which Xaa is preferably D-Ala, D-Ser or D-Thr. D-amino acid amides and methyl esters also are hydrolyzed, as is glycine amide.. Inhibited by beta-lactam compounds such as 6-aminopenicillic acid, 7-aminocephalosporanic acid, benzylpenicillin and ampicillin. Inhibited by p-chloromercuribenzoate. In terms of biological role, hydrolyzes N-terminal residues in D-amino acid-containing peptides. This is D-aminopeptidase from Cereibacter sphaeroides (strain KD131 / KCTC 12085) (Rhodobacter sphaeroides).